The primary structure comprises 152 residues: VVSTSPTKLVNVSYNNLTVNLGNELTPTQVKNQPTKVSWDAEPGALYTLVMTDPDAPSRKNPVFREWHHWLIINISGQNVSSGTVLSDYIGSGPPKGTGLHRYVFLVYKQPGSITDTQHGGNRPNFKVMDFANKHHLGNPVAGNFFQAKHED.

The protein belongs to the phosphatidylethanolamine-binding protein family.

In Onchocerca volvulus, this protein is Protein D1 (D1).